Consider the following 272-residue polypeptide: Putative protein-disulfide oxidoreductase RP025 (272 aa).

A signal peptide spans 1–21 (MRNIFIVLIFLFLSNCSEVKA). The 190-residue stretch at 74-263 (DSREQKKPEI…ISKAVDKALD (190 aa)) folds into the Thioredoxin domain. Cysteines 116 and 119 form a disulfide.

The protein belongs to the thioredoxin family. DsbA subfamily.

It localises to the periplasm. Its function is as follows. May be required for disulfide bond formation in some proteins. This chain is Putative protein-disulfide oxidoreductase RP025, found in Rickettsia prowazekii (strain Madrid E).